A 609-amino-acid polypeptide reads, in one-letter code: Invertase (609 aa).

Positions 1-14 are cleaved as a signal peptide; sequence MLKLLSLMVPLASA. 3 N-linked (GlcNAc...) asparagine glycosylation sites follow: N23, N32, and N36. Substrate contacts are provided by residues 56-59, Q77, and 119-120; these read WMND and FS. D59 is a catalytic residue. N128, N129, and N135 each carry an N-linked (GlcNAc...) asparagine glycan. 187–188 contributes to the substrate binding site; the sequence is RD. 2 N-linked (GlcNAc...) asparagine glycosylation sites follow: N227 and N233. Residue E245 coordinates substrate. N257, N267, N277, N284, N291, N298, N303, and N345 each carry an N-linked (GlcNAc...) asparagine glycan. W389 is a binding site for substrate. Residues N409, N420, N440, N448, N452, N477, N545, and N566 are each glycosylated (N-linked (GlcNAc...) asparagine).

This sequence belongs to the glycosyl hydrolase 32 family.

The catalysed reaction is Hydrolysis of terminal non-reducing beta-D-fructofuranoside residues in beta-D-fructofuranosides.. This chain is Invertase (INV1), found in Kluyveromyces lactis (strain ATCC 8585 / CBS 2359 / DSM 70799 / NBRC 1267 / NRRL Y-1140 / WM37) (Yeast).